The following is a 1764-amino-acid chain: Cilia- and flagella-associated protein 44 (1764 aa).

WD repeat units follow at residues 115-157 (GTER…IVLR), 160-199 (AFSQDVYGVAFSPYFEGQLTTSGQGHIRFWRMASTFTGLK), 208-248 (GNVE…VVLT), 255-294 (CHDGPIEALLLDRPAGRVLSAGADGRVRMWDFGAVNDAEP), 361-400 (HPAGAVAGLQLSARTHTALVASADGCLRALDYVSGAVLAE), 454-493 (AHKGAVAALAVSADGGRLVSAGEDGSVFFFDLTAQPQPGT), and 495-534 (VPGMPACGLLAPRAFIKLPSGSGTVTCGVWEAAEGGGVLL). The disordered stretch occupies residues 570–654 (QLVVPKPKRP…GGPSSTTGEL (85 aa)). A compositionally biased stretch (basic residues) spans 575–584 (KPKRPKKKKG). 2 stretches are compositionally biased toward basic and acidic residues: residues 585-596 (KNDGEEGDKEGG) and 604-628 (GEDKGGEQADGEGGSKEGGEEGRAA). The span at 629-641 (EEEEEEEADDEAD) shows a compositional bias: acidic residues. 3 WD repeats span residues 649–692 (STTG…PLAA), 707–752 (AHAG…LHDM), and 753–791 (QSGRVSGLGLSHDGAYLVTAAADGALHLLALALPPELAP). The stretch at 821-850 (YTLEEEKQQAERDQQVREAEEKKLSVRQRL) forms a coiled coil. Disordered regions lie at residues 972 to 1003 (AAAGGEGGAGGRDTDARGKGSDTGGGPGGDAA) and 1426 to 1468 (KKKA…CPPG). The segment covering 1434–1462 (GEDDYDSEEDEEDEDMGDDEVDDDDDGGE) has biased composition (acidic residues). 3 coiled-coil regions span residues 1479 to 1517 (DLREKRLDEEDMIAEFTKTIEVLRKEKEALAKKQRLVEQ), 1567 to 1674 (LVFS…DAKI), and 1729 to 1758 (EERDALVALVNAQAAELDRLKGQLLALRRK).

This sequence belongs to the CFAP44 family.

Its subcellular location is the cell projection. It is found in the cilium. The protein localises to the flagellum. It localises to the cytoplasm. The protein resides in the cytoskeleton. Its subcellular location is the flagellum axoneme. Functionally, flagellar protein involved in sperm flagellum axoneme organization and function. The sequence is that of Cilia- and flagella-associated protein 44 from Chlamydomonas reinhardtii (Chlamydomonas smithii).